Consider the following 270-residue polypeptide: Replication protein A 32 kDa subunit (270 aa).

Residue Met-1 is modified to N-acetylmethionine. A phosphoserine; by PRKDC mark is found at Ser-4 and Ser-8. The segment at 20–41 (YTQSPGGFGSPTPSQAEKKSRV) is disordered. The residue at position 21 (Thr-21) is a Phosphothreonine; by PRKDC. The residue at position 23 (Ser-23) is a Phosphoserine; by CDK2. Residue Ser-29 is modified to Phosphoserine; by CDK1. Phosphoserine; by PRKDC is present on Ser-33. Residues Lys-37 and Lys-38 each participate in a glycyl lysine isopeptide (Lys-Gly) (interchain with G-Cter in ubiquitin) cross-link. A DNA-binding region (OB) is located at residues 74–148 (VTIVGIIRHA…KSLVAFKIIP (75 aa)). The interval 171-192 (KPNSQASAGRPSMSNPGMSEPG) is disordered. Positions 187-270 (GMSEPGNFSG…DDHFKSTDAE (84 aa)) are interaction with RAD52, TIPIN, UNG and XPA.

This sequence belongs to the replication factor A protein 2 family. Component of the replication protein A complex (RPA/RP-A), a heterotrimeric complex composed of RPA1, RPA2 and RPA3. Interacts with PRPF19; the PRP19-CDC5L complex is recruited to the sites of DNA repair where it ubiquitinates the replication protein A complex (RPA). Interacts with SERTAD3. Interacts with TIPIN. Interacts with TIMELESS. Interacts with PPP4R2; the interaction is direct, DNA damage-dependent and mediates the recruitment of the PP4 catalytic subunit PPP4C. Interacts (hyperphosphorylated) with RAD51. Interacts with SMARCAL1; the interaction is direct and mediates the recruitment to the RPA complex of SMARCAL1. Interacts with RAD52 and XPA; those interactions are direct and associate RAD52 and XPA to the RPA complex. Interacts with FBH1. Interacts with ETAA1; the interaction is direct and promotes ETAA1 recruitment at stalled replication forks. Interacts with DDI2. Interacts (in unphosphorylated form via N-terminus) with EIF4EBP3; the interaction enhances EIF4EBP3-mediated inhibition of EIF4E-mediated mRNA nuclear export. Interacts with nuclear UNG (isoform 2); this interaction mediates UNG recruitment to RPA-coated single-stranded DNA at stalled replication forks. In terms of processing, differentially phosphorylated throughout the cell cycle, becoming phosphorylated at the G1-S transition and dephosphorylated in late mitosis. Mainly phosphorylated at Ser-23 and Ser-29, by cyclin A-CDK2 and cyclin B-CDK1, respectively during DNA replication and mitosis. Dephosphorylation may require the serine/threonine-protein phosphatase 4. Phosphorylation at Ser-23 and Ser-29 is a prerequisite for further phosphorylation. Becomes hyperphosphorylated on additional residues including Ser-4, Ser-8, Thr-21 and Ser-33 in response to DNA damage. Hyperphosphorylation is mediated by ATM, ATR and PRKDC. Primarily recruited to DNA repair nuclear foci as a hypophosphorylated form it undergoes subsequent hyperphosphorylation, catalyzed by ATR. Hyperphosphorylation is required for RAD51 recruitment to chromatin and efficient DNA repair. Phosphorylation at Thr-21 depends upon RFWD3 presence. Post-translationally, DNA damage-induced 'Lys-63'-linked polyubiquitination by PRPF19 mediates ATRIP recruitment to the RPA complex at sites of DNA damage and activation of ATR. Ubiquitinated by RFWD3 at stalled replication forks in response to DNA damage: ubiquitination by RFWD3 does not lead to degradation by the proteasome and promotes removal of the RPA complex from stalled replication forks, promoting homologous recombination.

The protein localises to the nucleus. It is found in the PML body. In terms of biological role, as part of the heterotrimeric replication protein A complex (RPA/RP-A), binds and stabilizes single-stranded DNA intermediates, that form during DNA replication or upon DNA stress. It prevents their reannealing and in parallel, recruits and activates different proteins and complexes involved in DNA metabolism. Thereby, it plays an essential role both in DNA replication and the cellular response to DNA damage. In the cellular response to DNA damage, the RPA complex controls DNA repair and DNA damage checkpoint activation. Through recruitment of ATRIP activates the ATR kinase a master regulator of the DNA damage response. It is required for the recruitment of the DNA double-strand break repair factors RAD51 and RAD52 to chromatin in response to DNA damage. Also recruits to sites of DNA damage proteins like XPA and XPG that are involved in nucleotide excision repair and is required for this mechanism of DNA repair. Also plays a role in base excision repair (BER) probably through interaction with UNG. Also recruits SMARCAL1/HARP, which is involved in replication fork restart, to sites of DNA damage. May also play a role in telomere maintenance. The polypeptide is Replication protein A 32 kDa subunit (Mus musculus (Mouse)).